A 92-amino-acid polypeptide reads, in one-letter code: Protein S100-B (92 aa).

S2 carries the blocked amino end (Ser); alternate modification. At S2 the chain carries N-acetylserine; alternate. 2 consecutive EF-hand domains span residues 13–48 (DVFH…LEEI) and 49–84 (KEQE…VTTA). Zn(2+) is bound at residue H16. Residues S19, E22, and D24 each coordinate Ca(2+). H26 contacts Zn(2+). Ca(2+) contacts are provided by K27, E32, D62, D64, D66, E68, and E73. 2 residues coordinate Zn(2+): H86 and H91.

Belongs to the S-100 family. Dimer of either two alpha chains, or two beta chains, or one alpha and one beta chain. The S100B dimer binds two molecules of STK38. Interacts with CACYBP in a calcium-dependent manner. Interacts with ATAD3A; this interaction probably occurs in the cytosol prior to ATAD3A mitochondrial targeting. Interacts with S100A6. The S100B dimer interacts with two molecules of CAPZA1. Interacts with AGER. Interacts with PPP5C (via TPR repeats); the interaction is calcium-dependent and modulates PPP5C activity. Interacts with TPPP; this interaction inhibits TPPP dimerization. Interacts with isoform CLSTN3beta of CLSTN3; interaction promotes secretion. As to expression, although predominant among the water-soluble brain proteins, S100 is also found in a variety of other tissues.

It is found in the cytoplasm. The protein localises to the nucleus. It localises to the secreted. In terms of biological role, small zinc- and- and calcium-binding protein that is highly expressed in astrocytes and constitutes one of the most abundant soluble proteins in brain. Weakly binds calcium but binds zinc very tightly-distinct binding sites with different affinities exist for both ions on each monomer. Physiological concentrations of potassium ion antagonize the binding of both divalent cations, especially affecting high-affinity calcium-binding sites. Acts as a neurotrophic factor that promotes astrocytosis and axonal proliferation. Involved in innervation of thermogenic adipose tissue by acting as an adipocyte-derived neurotrophic factor that promotes sympathetic innervation of adipose tissue. Binds to and initiates the activation of STK38 by releasing autoinhibitory intramolecular interactions within the kinase. Interaction with AGER after myocardial infarction may play a role in myocyte apoptosis by activating ERK1/2 and p53/TP53 signaling. Could assist ATAD3A cytoplasmic processing, preventing aggregation and favoring mitochondrial localization. May mediate calcium-dependent regulation on many physiological processes by interacting with other proteins, such as TPR-containing proteins, and modulating their activity. This Homo sapiens (Human) protein is Protein S100-B.